The sequence spans 115 residues: NADH-ubiquinone oxidoreductase chain 3 (115 aa).

A run of 3 helical transmembrane segments spans residues 4–24, 55–75, and 84–104; these read LMAL…AFWL, FFLV…LLPL, and INIM…GLAY.

This sequence belongs to the complex I subunit 3 family. Core subunit of respiratory chain NADH dehydrogenase (Complex I) which is composed of 45 different subunits. Interacts with TMEM186. Interacts with TMEM242.

It localises to the mitochondrion inner membrane. The catalysed reaction is a ubiquinone + NADH + 5 H(+)(in) = a ubiquinol + NAD(+) + 4 H(+)(out). Its function is as follows. Core subunit of the mitochondrial membrane respiratory chain NADH dehydrogenase (Complex I) which catalyzes electron transfer from NADH through the respiratory chain, using ubiquinone as an electron acceptor. Essential for the catalytic activity of complex I. The chain is NADH-ubiquinone oxidoreductase chain 3 from Peromyscus melanotis (Black-eared mouse).